Here is a 207-residue protein sequence, read N- to C-terminus: Octanoyltransferase (207 aa).

In terms of domain architecture, BPL/LPL catalytic spans 29-204; it reads DDTADELWLV…ELMVQLGDEE (176 aa). Substrate is bound by residues 68–75, 135–137, and 148–150; these read RGGQVTYH, SLG, and GVA. Catalysis depends on Cys-166, which acts as the Acyl-thioester intermediate.

The protein belongs to the LipB family.

The protein localises to the cytoplasm. The catalysed reaction is octanoyl-[ACP] + L-lysyl-[protein] = N(6)-octanoyl-L-lysyl-[protein] + holo-[ACP] + H(+). It participates in protein modification; protein lipoylation via endogenous pathway; protein N(6)-(lipoyl)lysine from octanoyl-[acyl-carrier-protein]: step 1/2. Catalyzes the transfer of endogenously produced octanoic acid from octanoyl-acyl-carrier-protein onto the lipoyl domains of lipoate-dependent enzymes. Lipoyl-ACP can also act as a substrate although octanoyl-ACP is likely to be the physiological substrate. In Methylococcus capsulatus (strain ATCC 33009 / NCIMB 11132 / Bath), this protein is Octanoyltransferase.